A 466-amino-acid polypeptide reads, in one-letter code: Bifunctional NAD(P)H-hydrate repair enzyme Nnr (466 aa).

The NAD(P)H-hydrate epimerase stretch occupies residues 1–207 (MLSVYEKVNA…HLGVFNQIYE (207 aa)). A YjeF N-terminal domain is found at 8-207 (VNALDKRAIE…HLGVFNQIYE (200 aa)). The interval 56–60 (DNGGD) is NADPHX 1; for epimerase activity. 2 residues coordinate K(+): N57 and D120. The tract at residues 124–130 (GSHFKGK) is NADPHX 1; for epimerase activity. D151 contacts (6S)-NADPHX. S154 is a binding site for K(+). In terms of domain architecture, YjeF C-terminal spans 215-466 (LEKSDLKLPL…LDLIEKIKQL (252 aa)). The segment at 215-466 (LEKSDLKLPL…LDLIEKIKQL (252 aa)) is ADP-dependent (S)-NAD(P)H-hydrate dehydratase. (6S)-NADPHX is bound at residue G300. The segment at 342–348 (HPKEFLS) is NADPHX 2; for dehydratase activity. ADP-binding positions include 385 to 389 (KGANT) and 404 to 413 (SVALAKAGSG). D414 provides a ligand contact to (6S)-NADPHX.

It in the N-terminal section; belongs to the NnrE/AIBP family. The protein in the C-terminal section; belongs to the NnrD/CARKD family. K(+) is required as a cofactor.

The enzyme catalyses (6S)-NADHX + ADP = AMP + phosphate + NADH + H(+). It catalyses the reaction (6S)-NADPHX + ADP = AMP + phosphate + NADPH + H(+). The catalysed reaction is (6R)-NADHX = (6S)-NADHX. It carries out the reaction (6R)-NADPHX = (6S)-NADPHX. Bifunctional enzyme that catalyzes the epimerization of the S- and R-forms of NAD(P)HX and the dehydration of the S-form of NAD(P)HX at the expense of ADP, which is converted to AMP. This allows the repair of both epimers of NAD(P)HX, a damaged form of NAD(P)H that is a result of enzymatic or heat-dependent hydration. This is Bifunctional NAD(P)H-hydrate repair enzyme Nnr (nnr) from Helicobacter pylori (strain ATCC 700392 / 26695) (Campylobacter pylori).